The following is a 481-amino-acid chain: ATP synthase subunit beta, chloroplastic (481 aa).

Position 162 to 169 (162 to 169) interacts with ATP; the sequence is GGAGVGKT.

It belongs to the ATPase alpha/beta chains family. As to quaternary structure, F-type ATPases have 2 components, CF(1) - the catalytic core - and CF(0) - the membrane proton channel. CF(1) has five subunits: alpha(3), beta(3), gamma(1), delta(1), epsilon(1). CF(0) has four main subunits: a(1), b(1), b'(1) and c(9-12).

The protein resides in the plastid. The protein localises to the chloroplast thylakoid membrane. It catalyses the reaction ATP + H2O + 4 H(+)(in) = ADP + phosphate + 5 H(+)(out). Produces ATP from ADP in the presence of a proton gradient across the membrane. The catalytic sites are hosted primarily by the beta subunits. This is ATP synthase subunit beta, chloroplastic from Chlorella vulgaris (Green alga).